We begin with the raw amino-acid sequence, 393 residues long: Ornithine decarboxylase 2 (393 aa).

N6-(pyridoxal phosphate)lysine is present on K62. Residues S194, G231, and 265 to 268 (EPGR) contribute to the pyridoxal 5'-phosphate site. Substrate is bound at residue 314–315 (YY). Catalysis depends on C343, which acts as the Proton donor; shared with dimeric partner. D344 lines the substrate pocket. Y371 lines the pyridoxal 5'-phosphate pocket.

This sequence belongs to the Orn/Lys/Arg decarboxylase class-II family. In terms of assembly, homodimer. Only the dimer is catalytically active, as the active sites are constructed of residues from both monomers. Pyridoxal 5'-phosphate serves as cofactor.

It catalyses the reaction L-ornithine + H(+) = putrescine + CO2. The protein operates within amine and polyamine biosynthesis; putrescine biosynthesis via L-ornithine pathway; putrescine from L-ornithine: step 1/1. Its activity is regulated as follows. Inhibited by antizyme (AZ) in response to polyamine levels. AZ inhibits the assembly of the functional homodimer by binding to ODC monomers and targeting them for ubiquitin-independent proteolytic destruction by the 26S proteasome. Its function is as follows. Catalyzes the first and rate-limiting step of polyamine biosynthesis that converts ornithine into putrescine, which is the precursor for the polyamines, spermidine and spermine. Polyamines are essential for cell proliferation and are implicated in cellular processes, ranging from DNA replication to apoptosis. The protein is Ornithine decarboxylase 2 (Odc2) of Drosophila melanogaster (Fruit fly).